Consider the following 348-residue polypeptide: MTSPATLKVLNAYLDNPTPTLEEAIEVFTPLTVGEYDDVHIAALLATIRTRGEQFADIAGAAKAFLAAARPFPITGAGLLDSAGTGGDGANTINITTGASLIAASGGVKLVKHGNRSVSSKSGSADVLEALNIPLGLDVDRAVKWFEASNFTFLFAPAYNPAIAHVQPVRQALKFPTIFNTLGPLLSPARPERQIMGVANANHGQLIAEVFRELGRTRALVVHGAGTDEIAVHGTTLVWELKEDGTIEHYTIEPEDLGLGRYTLEDLVGGLGTENAEAMRATFAGTGPDAHRDALAASAGAMFYLNGDVDSLKDGAQKALSLLADGTTQAWLAKHEEIDYSEKESSND.

Residues Gly84, 87–88, Thr92, 94–97, 112–120, and Ser124 each bind 5-phospho-alpha-D-ribose 1-diphosphate; these read GD, NITT, and KHGNRSVSS. Gly84 is an anthranilate binding site. Position 96 (Thr96) interacts with Mg(2+). Residue Asn115 coordinates anthranilate. Arg170 serves as a coordination point for anthranilate. Residues Asp228 and Glu229 each contribute to the Mg(2+) site.

It belongs to the anthranilate phosphoribosyltransferase family. In terms of assembly, homodimer. The cofactor is Mg(2+).

The catalysed reaction is N-(5-phospho-beta-D-ribosyl)anthranilate + diphosphate = 5-phospho-alpha-D-ribose 1-diphosphate + anthranilate. It participates in amino-acid biosynthesis; L-tryptophan biosynthesis; L-tryptophan from chorismate: step 2/5. Catalyzes the transfer of the phosphoribosyl group of 5-phosphorylribose-1-pyrophosphate (PRPP) to anthranilate to yield N-(5'-phosphoribosyl)-anthranilate (PRA). The chain is Anthranilate phosphoribosyltransferase from Corynebacterium glutamicum (strain R).